The primary structure comprises 155 residues: Large ribosomal subunit protein uL30 (155 aa).

This sequence belongs to the universal ribosomal protein uL30 family. In terms of assembly, part of the 50S ribosomal subunit.

The protein is Large ribosomal subunit protein uL30 of Nanoarchaeum equitans (strain Kin4-M).